The chain runs to 858 residues: Leucine--tRNA ligase (858 aa).

The 'HIGH' region motif lies at 43–54; that stretch reads PYPSGDGLHVGH. Positions 629–633 match the 'KMSKS' region motif; it reads KMSKS. Lys632 provides a ligand contact to ATP.

Belongs to the class-I aminoacyl-tRNA synthetase family.

It localises to the cytoplasm. The catalysed reaction is tRNA(Leu) + L-leucine + ATP = L-leucyl-tRNA(Leu) + AMP + diphosphate. In Treponema denticola (strain ATCC 35405 / DSM 14222 / CIP 103919 / JCM 8153 / KCTC 15104), this protein is Leucine--tRNA ligase.